Consider the following 147-residue polypeptide: Large ribosomal subunit protein uL15 (147 aa).

Over residues 1–28 (MIRRRKKVRKLRGSHTHGWGCKKKHRGG) the composition is skewed to basic residues. A disordered region spans residues 1–43 (MIRRRKKVRKLRGSHTHGWGCKKKHRGGGSKGGRGMAGTGKRN). The segment covering 29–38 (GSKGGRGMAG) has biased composition (gly residues).

This sequence belongs to the universal ribosomal protein uL15 family. Part of the 50S ribosomal subunit.

Functionally, binds to the 23S rRNA. The sequence is that of Large ribosomal subunit protein uL15 from Pyrococcus furiosus (strain ATCC 43587 / DSM 3638 / JCM 8422 / Vc1).